Reading from the N-terminus, the 284-residue chain is Deoxyribonuclease-1 (284 aa).

Residues 1-22 form the signal peptide; sequence MRYTGLMGTLLTLVNLLQLAGT. The N-linked (GlcNAc...) asparagine glycan is linked to N40. E100 is a catalytic residue. C123 and C126 are joined by a disulfide. N-linked (GlcNAc...) asparagine glycosylation is present at N128. Residue H156 is part of the active site. A disulfide bond links C195 and C231.

It belongs to the DNase I family. Ca(2+) is required as a cofactor. It depends on Mg(2+) as a cofactor. In terms of processing, N-glycosylated. As to expression, highly expressed in the parotid and submandibular gland as well as in the kidney and duodenum (at protein level). Expressed at intermediate level in the ileum, mesenterial lymph nodes, liver, ventral prostate, epididymis, ovary and stomach (at protein level). Expressed at low level in the sublingual, preputial, coagulation and pituitary gland (at protein level). Also present in the lachrymal and thyroid glands, striated muscle, intestine, the urinary bladder and the eye.

It localises to the secreted. It is found in the zymogen granule. The protein resides in the nucleus envelope. It catalyses the reaction Endonucleolytic cleavage to 5'-phosphodinucleotide and 5'-phosphooligonucleotide end-products.. Its function is as follows. Serum endocuclease secreted into body fluids by a wide variety of exocrine and endocrine organs. Expressed by non-hematopoietic tissues and preferentially cleaves protein-free DNA. Among other functions, seems to be involved in cell death by apoptosis. Binds specifically to G-actin and blocks actin polymerization. Together with DNASE1L3, plays a key role in degrading neutrophil extracellular traps (NETs). NETs are mainly composed of DNA fibers and are released by neutrophils to bind pathogens during inflammation. Degradation of intravascular NETs by DNASE1 and DNASE1L3 is required to prevent formation of clots that obstruct blood vessels and cause organ damage following inflammation. The polypeptide is Deoxyribonuclease-1 (Mus musculus (Mouse)).